The primary structure comprises 283 residues: NAD(P)H-hydrate epimerase (283 aa).

The transit peptide at 1 to 28 directs the protein to the mitochondrion; sequence MLGVRALFGIGLLVTSRGGFVLTHTRAC. The 210-residue stretch at 61–270 folds into the YjeF N-terminal domain; sequence AQQIDEELFS…VLEQKYQLNL (210 aa). 115–119 serves as a coordination point for (6S)-NADPHX; the sequence is NNGGD. The K(+) site is built by N116 and D180. Residues 184-190 and D213 contribute to the (6S)-NADPHX site; that span reads GFSFKGA. S216 contributes to the K(+) binding site.

Belongs to the NnrE/AIBP family. As to quaternary structure, homodimer. Interacts with apoa1a. Binds to high-density lipoprotein. It depends on K(+) as a cofactor.

The protein resides in the mitochondrion. The protein localises to the secreted. It catalyses the reaction (6R)-NADHX = (6S)-NADHX. The catalysed reaction is (6R)-NADPHX = (6S)-NADPHX. Functionally, catalyzes the epimerization of the S- and R-forms of NAD(P)HX, a damaged form of NAD(P)H that is a result of enzymatic or heat-dependent hydration. This is a prerequisite for the S-specific NAD(P)H-hydrate dehydratase to allow the repair of both epimers of NAD(P)HX. In Danio rerio (Zebrafish), this protein is NAD(P)H-hydrate epimerase.